The primary structure comprises 232 residues: EEF1A lysine methyltransferase 3 (232 aa).

S-adenosyl-L-methionine is bound by residues W57, 83–85, D104, W133, and A150; that span reads GAG.

This sequence belongs to the methyltransferase superfamily. METTL21 family. As to quaternary structure, interacts with members of the heat shock protein 70 and 90 families and of the TCP-1 chaperonin family, as well as with HSPD1, STIP1 and tubulin; at least some of these proteins may be methylation substrates.

It is found in the cytoplasm. Its subcellular location is the cytoskeleton. The protein resides in the microtubule organizing center. The protein localises to the centrosome. The catalysed reaction is L-lysyl-[protein] + 3 S-adenosyl-L-methionine = N(6),N(6),N(6)-trimethyl-L-lysyl-[protein] + 3 S-adenosyl-L-homocysteine + 3 H(+). It catalyses the reaction L-lysyl-[protein] + S-adenosyl-L-methionine = N(6)-methyl-L-lysyl-[protein] + S-adenosyl-L-homocysteine + H(+). The enzyme catalyses N(6)-methyl-L-lysyl-[protein] + S-adenosyl-L-methionine = N(6),N(6)-dimethyl-L-lysyl-[protein] + S-adenosyl-L-homocysteine + H(+). It carries out the reaction N(6),N(6)-dimethyl-L-lysyl-[protein] + S-adenosyl-L-methionine = N(6),N(6),N(6)-trimethyl-L-lysyl-[protein] + S-adenosyl-L-homocysteine + H(+). Protein-lysine methyltransferase that selectively mono-, di- and trimethylates 'Lys-165' of the translation elongation factors EEF1A1 and EEF1A2 in an aminoacyl-tRNA and GTP-dependent manner. EEF1A1 methylation by EEF1AKMT3 is dynamic as well as inducible by stress conditions, such as ER-stress, and plays a regulatory role on mRNA translation. The sequence is that of EEF1A lysine methyltransferase 3 from Mus musculus (Mouse).